Here is a 169-residue protein sequence, read N- to C-terminus: Large ribosomal subunit protein uL10 (169 aa).

It belongs to the universal ribosomal protein uL10 family. Part of the ribosomal stalk of the 50S ribosomal subunit. The N-terminus interacts with L11 and the large rRNA to form the base of the stalk. The C-terminus forms an elongated spine to which L12 dimers bind in a sequential fashion forming a multimeric L10(L12)X complex.

Its function is as follows. Forms part of the ribosomal stalk, playing a central role in the interaction of the ribosome with GTP-bound translation factors. In Rickettsia felis (strain ATCC VR-1525 / URRWXCal2) (Rickettsia azadi), this protein is Large ribosomal subunit protein uL10.